Reading from the N-terminus, the 805-residue chain is Translation initiation factor IF-2 (805 aa).

Disordered regions lie at residues 68–89 (VVTE…EKKE) and 141–215 (KEKE…KEKK). Residues 79–89 (VEEKKEEEKKE) are compositionally biased toward basic and acidic residues. Residues 306 to 474 (PRPPIVVVMG…MILLLADILE (169 aa)) form the tr-type G domain. The tract at residues 315-322 (GHVDHGKT) is G1. 315-322 (GHVDHGKT) provides a ligand contact to GTP. The interval 340-344 (GITQH) is G2. The tract at residues 362 to 365 (DTPG) is G3. GTP-binding positions include 362-366 (DTPGH) and 416-419 (NKID). Residues 416 to 419 (NKID) are G4. The interval 452 to 454 (SAK) is G5.

Belongs to the TRAFAC class translation factor GTPase superfamily. Classic translation factor GTPase family. IF-2 subfamily.

It is found in the cytoplasm. One of the essential components for the initiation of protein synthesis. Protects formylmethionyl-tRNA from spontaneous hydrolysis and promotes its binding to the 30S ribosomal subunits. Also involved in the hydrolysis of GTP during the formation of the 70S ribosomal complex. This Aquifex aeolicus (strain VF5) protein is Translation initiation factor IF-2 (infB).